The primary structure comprises 593 residues: Arylsulfatase D (593 aa).

An N-terminal signal peptide occupies residues 1–33 (MRSAARRGRAAPAARDSLPVLLFLCLLLKTCEP). Asp-49 and Asp-50 together coordinate Ca(2+). Asn-61 carries an N-linked (GlcNAc...) asparagine glycan. Cys-89 is a binding site for Ca(2+). The active-site Nucleophile is the Cys-89. Cys-89 is modified (3-oxoalanine (Cys)). Asn-128 carries N-linked (GlcNAc...) asparagine glycosylation. Lys-148 contributes to the substrate binding site. The active site involves His-150. Residue His-304 participates in substrate binding. N-linked (GlcNAc...) asparagine glycosylation is present at Asn-347. Positions 356 and 357 each coordinate Ca(2+). Lys-381 provides a ligand contact to substrate.

It belongs to the sulfatase family. Ca(2+) serves as cofactor. The conversion to 3-oxoalanine (also known as C-formylglycine, FGly), of a serine or cysteine residue in prokaryotes and of a cysteine residue in eukaryotes, is critical for catalytic activity. As to expression, expressed in the pancreas, kidney, liver, lung, placenta, brain and heart.

It is found in the lysosome. The protein is Arylsulfatase D (ARSD) of Homo sapiens (Human).